The chain runs to 446 residues: Glutamyl-tRNA reductase (446 aa).

Residues threonine 49 to arginine 52, serine 108, glutamate 113 to glutamine 115, and glutamine 119 contribute to the substrate site. Cysteine 50 functions as the Nucleophile in the catalytic mechanism. NADP(+) is bound at residue glycine 188–serine 193.

It belongs to the glutamyl-tRNA reductase family. Homodimer.

It carries out the reaction (S)-4-amino-5-oxopentanoate + tRNA(Glu) + NADP(+) = L-glutamyl-tRNA(Glu) + NADPH + H(+). It functions in the pathway porphyrin-containing compound metabolism; protoporphyrin-IX biosynthesis; 5-aminolevulinate from L-glutamyl-tRNA(Glu): step 1/2. Its function is as follows. Catalyzes the NADPH-dependent reduction of glutamyl-tRNA(Glu) to glutamate 1-semialdehyde (GSA). This chain is Glutamyl-tRNA reductase, found in Desulforudis audaxviator (strain MP104C).